A 483-amino-acid polypeptide reads, in one-letter code: UDP-N-acetylmuramoyl-L-alanyl-D-glutamate--2,6-diaminopimelate ligase (483 aa).

Serine 30 is a UDP-N-acetyl-alpha-D-muramoyl-L-alanyl-D-glutamate binding site. Residue glycine 109 to threonine 115 participates in ATP binding. UDP-N-acetyl-alpha-D-muramoyl-L-alanyl-D-glutamate-binding positions include threonine 151–threonine 152, serine 178, and arginine 186. Lysine 218 is modified (N6-carboxylysine). Meso-2,6-diaminopimelate contacts are provided by residues arginine 380, aspartate 403–arginine 406, glycine 453, and glutamate 457. The Meso-diaminopimelate recognition motif motif lies at aspartate 403–arginine 406.

This sequence belongs to the MurCDEF family. MurE subfamily. Mg(2+) is required as a cofactor. Carboxylation is probably crucial for Mg(2+) binding and, consequently, for the gamma-phosphate positioning of ATP.

It localises to the cytoplasm. The catalysed reaction is UDP-N-acetyl-alpha-D-muramoyl-L-alanyl-D-glutamate + meso-2,6-diaminopimelate + ATP = UDP-N-acetyl-alpha-D-muramoyl-L-alanyl-gamma-D-glutamyl-meso-2,6-diaminopimelate + ADP + phosphate + H(+). The protein operates within cell wall biogenesis; peptidoglycan biosynthesis. Functionally, catalyzes the addition of meso-diaminopimelic acid to the nucleotide precursor UDP-N-acetylmuramoyl-L-alanyl-D-glutamate (UMAG) in the biosynthesis of bacterial cell-wall peptidoglycan. The polypeptide is UDP-N-acetylmuramoyl-L-alanyl-D-glutamate--2,6-diaminopimelate ligase (Chlamydia muridarum (strain MoPn / Nigg)).